Reading from the N-terminus, the 322-residue chain is MARDKIALIGSGQIGGTLAHLIGLKELGDVVMFDIAEGVPQGKALDIAQSSPVDGFDAHYTGANSYEALDNAKVCIVTAGVPRKPGMSRDDLLSINLKVMEQVGAGIKKYAPDAFVICITNPLDAMVWALQKASGLPHKKVVGMAGVLDSARFRYFLADEFNVSVEDVTAFVLGGHGDTMVPLVKYSTVAGIPLPDLVKMGWTSQARLDEIVDRTRNGGAEIVNLLKTGSAFYAPAASAIAMAESYLRDKKRVLPSAAYLNGEYGVKDMYVGVPVVIGSKGVERVVEIELAGKDREAFDKSVGAVQGLVDACKKIAPDLLGR.

NAD(+) contacts are provided by residues 10–15 and aspartate 34; that span reads GSGQIG. Arginine 83 and arginine 89 together coordinate substrate. Residues asparagine 96 and 119–121 contribute to the NAD(+) site; that span reads ITN. Residues asparagine 121 and arginine 152 each contribute to the substrate site. The active-site Proton acceptor is the histidine 176.

It belongs to the LDH/MDH superfamily. MDH type 3 family.

It carries out the reaction (S)-malate + NAD(+) = oxaloacetate + NADH + H(+). Functionally, catalyzes the reversible oxidation of malate to oxaloacetate. The protein is Malate dehydrogenase of Bradyrhizobium diazoefficiens (strain JCM 10833 / BCRC 13528 / IAM 13628 / NBRC 14792 / USDA 110).